A 551-amino-acid polypeptide reads, in one-letter code: Delta-selinene synthase TPS7FN (551 aa).

(2E,6E)-farnesyl diphosphate is bound by residues arginine 266, aspartate 303, aspartate 307, arginine 444, and aspartate 447. Positions 303 and 307 each coordinate Mg(2+). Positions 303–307 (DDIYD) match the DDXXD motif motif. Residues aspartate 447, serine 451, and glutamate 455 each contribute to the Mg(2+) site.

The protein belongs to the terpene synthase family. Tpsb subfamily. Requires Mg(2+) as cofactor. Mn(2+) serves as cofactor.

It catalyses the reaction (2E,6E)-farnesyl diphosphate = delta-selinene + diphosphate. It carries out the reaction (2E)-geranyl diphosphate = beta-myrcene + diphosphate. The enzyme catalyses (2E)-geranyl diphosphate = (4S)-limonene + diphosphate. The catalysed reaction is (2E,6E)-farnesyl diphosphate + H2O = selina-6-en-4-ol + diphosphate. It functions in the pathway secondary metabolite biosynthesis; terpenoid biosynthesis. In terms of biological role, involved in sesquiterpene olefins biosynthesis, constituants of cannabinoids and terpenoids-rich resins. Catalyzes mainly the conversion of (2E)-farnesyl diphosphate to delta-selinene, and also produces minor products such as selina-6-en-4-ol. Can also use (2E)-geranyl diphosphate as substrate with low efficiency, producing minor amounts of myrcene and limonene. This chain is Delta-selinene synthase TPS7FN, found in Cannabis sativa (Hemp).